The chain runs to 261 residues: Putative [LysW]-aminoadipate/[LysW]-glutamate kinase (261 aa).

Substrate is bound by residues glycine 35–glycine 36, arginine 62, and asparagine 162.

The protein belongs to the acetylglutamate kinase family. LysZ subfamily.

The protein resides in the cytoplasm. It carries out the reaction [amino-group carrier protein]-C-terminal-N-(1,4-dicarboxybutan-1-yl)-L-glutamine + ATP = [amino-group carrier protein]-C-terminal-N-(1-carboxy-5-phosphooxy-5-oxopentan-1-yl)-L-glutamine + ADP. It catalyses the reaction [amino-group carrier protein]-C-terminal-gamma-(L-glutamyl)-L-glutamate + ATP = [amino-group carrier protein]-C-terminal-gamma-(5-phospho-L-glutamyl)-L-glutamate + ADP. The protein operates within amino-acid biosynthesis; L-lysine biosynthesis via AAA pathway; L-lysine from L-alpha-aminoadipate (Thermus route): step 2/5. It participates in amino-acid biosynthesis; L-arginine biosynthesis. Its function is as follows. Involved in both the arginine and lysine biosynthetic pathways. Phosphorylates the LysW-bound precursors glutamate (for arginine biosynthesis), respectively alpha-aminoadipate (for lysine biosynthesis). The polypeptide is Putative [LysW]-aminoadipate/[LysW]-glutamate kinase (Pyrobaculum aerophilum (strain ATCC 51768 / DSM 7523 / JCM 9630 / CIP 104966 / NBRC 100827 / IM2)).